A 286-amino-acid chain; its full sequence is Light-independent protochlorophyllide reductase iron-sulfur ATP-binding protein (286 aa).

Residues 10 to 15 (GIGKST) and lysine 39 contribute to the ATP site. Mg(2+) is bound at residue serine 14. Residues cysteine 95 and cysteine 129 each contribute to the [4Fe-4S] cluster site. Residue 180 to 181 (NR) coordinates ATP.

This sequence belongs to the NifH/BchL/ChlL family. As to quaternary structure, homodimer. Protochlorophyllide reductase is composed of three subunits; ChlL, ChlN and ChlB. [4Fe-4S] cluster is required as a cofactor.

It carries out the reaction chlorophyllide a + oxidized 2[4Fe-4S]-[ferredoxin] + 2 ADP + 2 phosphate = protochlorophyllide a + reduced 2[4Fe-4S]-[ferredoxin] + 2 ATP + 2 H2O. It functions in the pathway porphyrin-containing compound metabolism; chlorophyll biosynthesis (light-independent). Functionally, component of the dark-operative protochlorophyllide reductase (DPOR) that uses Mg-ATP and reduced ferredoxin to reduce ring D of protochlorophyllide (Pchlide) to form chlorophyllide a (Chlide). This reaction is light-independent. The L component serves as a unique electron donor to the NB-component of the complex, and binds Mg-ATP. This chain is Light-independent protochlorophyllide reductase iron-sulfur ATP-binding protein, found in Cyanothece sp. (strain PCC 7425 / ATCC 29141).